The primary structure comprises 288 residues: RanBP2-type zinc finger protein At1g67325 (288 aa).

Positions 1 to 11 (MSQVDNRNSSA) are enriched in polar residues. 5 disordered regions span residues 1–24 (MSQVDNRNSSAAKRARTDGGRRED), 52–77 (PADHNGKSAPKPMQHQQGFSSPGAYL), 176–198 (MPRPRFYPDEKSQKRDSTRDNDW), 222–248 (PKPGSQQGGSSDKISKQNAPEGSWKCD), and 265–288 (NCGADKPGDRSNGSPSRAPEENDQ). Positions 15–24 (ARTDGGRRED) are enriched in basic and acidic residues. RanBP2-type zinc fingers lie at residues 22 to 53 (REDDWICPSCGNVNFSFRTTCNMRNCTQPRPA), 194 to 225 (RDNDWTCPNCGNVNFSFRTVCNMRKCNTPKPG), and 241 to 272 (PEGSWKCDNCGNINYPFRSKCNRQNCGADKPG). The span at 181-197 (FYPDEKSQKRDSTRDND) shows a compositional bias: basic and acidic residues. Residues 223 to 241 (KPGSQQGGSSDKISKQNAP) show a composition bias toward polar residues. The residue at position 278 (serine 278) is a Phosphoserine.

This is RanBP2-type zinc finger protein At1g67325 from Arabidopsis thaliana (Mouse-ear cress).